Consider the following 253-residue polypeptide: 5'/3'-nucleotidase SurE (253 aa).

Positions 8, 9, 39, and 92 each coordinate a divalent metal cation.

This sequence belongs to the SurE nucleotidase family. A divalent metal cation serves as cofactor.

The protein resides in the cytoplasm. It carries out the reaction a ribonucleoside 5'-phosphate + H2O = a ribonucleoside + phosphate. The enzyme catalyses a ribonucleoside 3'-phosphate + H2O = a ribonucleoside + phosphate. The catalysed reaction is [phosphate](n) + H2O = [phosphate](n-1) + phosphate + H(+). Its function is as follows. Nucleotidase with a broad substrate specificity as it can dephosphorylate various ribo- and deoxyribonucleoside 5'-monophosphates and ribonucleoside 3'-monophosphates with highest affinity to 3'-AMP. Also hydrolyzes polyphosphate (exopolyphosphatase activity) with the preference for short-chain-length substrates (P20-25). Might be involved in the regulation of dNTP and NTP pools, and in the turnover of 3'-mononucleotides produced by numerous intracellular RNases (T1, T2, and F) during the degradation of various RNAs. The protein is 5'/3'-nucleotidase SurE of Cronobacter sakazakii (strain ATCC BAA-894) (Enterobacter sakazakii).